A 77-amino-acid chain; its full sequence is Large ribosomal subunit protein eL14 (77 aa).

This sequence belongs to the eukaryotic ribosomal protein eL14 family.

This is Large ribosomal subunit protein eL14 from Methanococcus maripaludis (strain C7 / ATCC BAA-1331).